The chain runs to 100 residues: uncharacterized protein (100 aa).

Belongs to the ycf15 family.

The protein resides in the plastid. It localises to the chloroplast. This is an uncharacterized protein from Panax ginseng (Korean ginseng).